The chain runs to 207 residues: dTDP-4-dehydrorhamnose 3-epimerase (207 aa).

Substrate contacts are provided by residues arginine 23, aspartate 28, glutamine 47–asparagine 49, and arginine 59. Histidine 62 acts as the Proton acceptor in catalysis. Substrate contacts are provided by lysine 72 and histidine 119. Tyrosine 132 serves as the catalytic Proton donor. Substrate is bound by residues glutamate 143 and arginine 167.

Belongs to the dTDP-4-dehydrorhamnose 3,5-epimerase family.

It participates in antibiotic biosynthesis; novobiocin biosynthesis. DTDP-6-deoxy-D-xylo-4-hexulose 3-epimerase that acts together with NovU to catalyze the formation of dTDP-4-keto-6-deoxy-5-C-methyl-L-lyxo-hexose from dTDP-4-keto-6-deoxy-D-glucose in the novobiocin biosynthesis pathway, an aminocoumarin family antibiotic that targets bacterial DNA gyrases. This Streptomyces niveus (Streptomyces spheroides) protein is dTDP-4-dehydrorhamnose 3-epimerase.